The chain runs to 348 residues: Nicotinate-nucleotide--dimethylbenzimidazole phosphoribosyltransferase (348 aa).

Residue Glu316 is the Proton acceptor of the active site.

Belongs to the CobT family.

It catalyses the reaction 5,6-dimethylbenzimidazole + nicotinate beta-D-ribonucleotide = alpha-ribazole 5'-phosphate + nicotinate + H(+). The protein operates within nucleoside biosynthesis; alpha-ribazole biosynthesis; alpha-ribazole from 5,6-dimethylbenzimidazole: step 1/2. Functionally, catalyzes the synthesis of alpha-ribazole-5'-phosphate from nicotinate mononucleotide (NAMN) and 5,6-dimethylbenzimidazole (DMB). This chain is Nicotinate-nucleotide--dimethylbenzimidazole phosphoribosyltransferase, found in Xanthomonas campestris pv. campestris (strain B100).